The primary structure comprises 96 residues: MKVIINGKEFDIPKGVRFGELSHEIEKAGIEFGCTDGQCGVCVARVIKGMECLNEPSEEEEETLWRVGAVDEDQRLTCQLVIEKEDCDEIVIESED.

The region spanning M1–E95 is the 2Fe-2S ferredoxin-type domain. [2Fe-2S] cluster is bound by residues C34, C39, C42, and C78. C52 and C87 form a disulfide bridge.

Belongs to the 2Fe2S plant-type ferredoxin family. It depends on [2Fe-2S] cluster as a cofactor.

Functionally, ferredoxins are iron-sulfur proteins that transfer electrons in a wide variety of metabolic reactions. The protein is Ferredoxin-1 (fdx1) of Aquifex aeolicus (strain VF5).